The following is a 66-amino-acid chain: Large ribosomal subunit protein bL33c (66 aa).

Belongs to the bacterial ribosomal protein bL33 family.

It localises to the plastid. The protein localises to the chloroplast. The polypeptide is Large ribosomal subunit protein bL33c (Manihot esculenta (Cassava)).